We begin with the raw amino-acid sequence, 74 residues long: Small integral membrane protein 15 (74 aa).

Residues Tyr-20 to Leu-40 form a helical membrane-spanning segment. A coiled-coil region spans residues Trp-42 to Asp-74. The segment covering Gln-55 to Ala-66 has biased composition (basic and acidic residues). A disordered region spans residues Gln-55–Asp-74.

Belongs to the SMIM15 family.

The protein localises to the membrane. In Homo sapiens (Human), this protein is Small integral membrane protein 15 (SMIM15).